The primary structure comprises 194 residues: Early growth response protein 1 (194 aa).

C2H2-type zinc fingers lie at residues 1-18 (CDRR…IRIH), 24-46 (FQCR…IRTH), and 52-74 (FACD…TKIH).

It belongs to the EGR C2H2-type zinc-finger protein family.

The protein resides in the nucleus. The protein localises to the cytoplasm. Functionally, transcriptional regulator. Recognizes and binds to the DNA sequence 5'-GCG(T/G)GGGCG-3'(EGR-site) in the promoter region of target genes. Binds double-stranded target DNA, irrespective of the cytosine methylation status. Regulates the transcription of numerous target genes, and thereby plays an important role in regulating the response to growth factors, DNA damage, and ischemia. Plays a role in the regulation of cell survival, proliferation and cell death. Mediates responses to ischemia and hypoxia; regulates the expression of proteins that are involved in inflammatory processes. Plays a role in regulating the expression of circadian clock genes. This chain is Early growth response protein 1 (EGR1), found in Gallus gallus (Chicken).